Here is a 156-residue protein sequence, read N- to C-terminus: Small ribosomal subunit protein uS7 (156 aa).

This sequence belongs to the universal ribosomal protein uS7 family. Part of the 30S ribosomal subunit. Contacts proteins S9 and S11.

One of the primary rRNA binding proteins, it binds directly to 16S rRNA where it nucleates assembly of the head domain of the 30S subunit. Is located at the subunit interface close to the decoding center, probably blocks exit of the E-site tRNA. In Carboxydothermus hydrogenoformans (strain ATCC BAA-161 / DSM 6008 / Z-2901), this protein is Small ribosomal subunit protein uS7.